A 98-amino-acid chain; its full sequence is Putative septation protein SpoVG (98 aa).

It belongs to the SpoVG family.

Functionally, essential for sporulation. Interferes with or is a negative regulator of the pathway leading to asymmetric septation. This is Putative septation protein SpoVG from Shouchella clausii (strain KSM-K16) (Alkalihalobacillus clausii).